Consider the following 274-residue polypeptide: Large ribosomal subunit protein uL2 (274 aa).

Disordered stretches follow at residues 1–23 (MAIK…SFEE) and 222–242 (GSAM…SPIG).

Belongs to the universal ribosomal protein uL2 family. In terms of assembly, part of the 50S ribosomal subunit. Forms a bridge to the 30S subunit in the 70S ribosome.

Functionally, one of the primary rRNA binding proteins. Required for association of the 30S and 50S subunits to form the 70S ribosome, for tRNA binding and peptide bond formation. It has been suggested to have peptidyltransferase activity; this is somewhat controversial. Makes several contacts with the 16S rRNA in the 70S ribosome. This is Large ribosomal subunit protein uL2 from Dehalococcoides mccartyi (strain ATCC BAA-2266 / KCTC 15142 / 195) (Dehalococcoides ethenogenes (strain 195)).